A 218-amino-acid polypeptide reads, in one-letter code: Small ribosomal subunit protein uS3c (218 aa).

Positions 47 to 118 (VQKEMRISSG…RLNVVITRVA (72 aa)) constitute a KH type-2 domain.

The protein belongs to the universal ribosomal protein uS3 family. Part of the 30S ribosomal subunit.

It is found in the plastid. The protein localises to the chloroplast. The polypeptide is Small ribosomal subunit protein uS3c (rps3) (Ceratophyllum demersum (Rigid hornwort)).